The chain runs to 197 residues: Ion-translocating oxidoreductase complex subunit B (197 aa).

A hydrophobic region spans residues 1–26 (MSIVIIAVLALSALALTFGAVLGFAS). The 4Fe-4S domain occupies 32-90 (EGNPIVDQIDGLLPQTQCGQCGYPGCRPYAEAIANGDAINKCPPGGEATITALADLLDV). C49, C52, C57, C73, C115, C118, C121, C125, C145, C148, C151, and C155 together coordinate [4Fe-4S] cluster. 4Fe-4S ferredoxin-type domains lie at 106 to 135 (QVAYIREDECIGCTKCIQACPVDAILGAAK) and 136 to 165 (QMHTVIVSECTGCDLCVEPCPVDCIDMIPA).

Belongs to the 4Fe4S bacterial-type ferredoxin family. RnfB subfamily. In terms of assembly, the complex is composed of six subunits: RnfA, RnfB, RnfC, RnfD, RnfE and RnfG. It depends on [4Fe-4S] cluster as a cofactor.

It is found in the cell inner membrane. Part of a membrane-bound complex that couples electron transfer with translocation of ions across the membrane. The chain is Ion-translocating oxidoreductase complex subunit B from Hahella chejuensis (strain KCTC 2396).